The sequence spans 490 residues: Cytochrome P450 2C25 (490 aa).

Cys-435 contacts heme.

The protein belongs to the cytochrome P450 family. Heme is required as a cofactor.

The protein resides in the endoplasmic reticulum membrane. It localises to the microsome membrane. It catalyses the reaction an organic molecule + reduced [NADPH--hemoprotein reductase] + O2 = an alcohol + oxidized [NADPH--hemoprotein reductase] + H2O + H(+). In terms of biological role, catalyzes the hydroxylation of tolbutamide and the N-demethylation of aminopyrine and benzphetamine. Also has testosterone hydroxylase (16 beta) activity. The protein is Cytochrome P450 2C25 (CYP2C25) of Mesocricetus auratus (Golden hamster).